Reading from the N-terminus, the 270-residue chain is tRNA pseudouridine synthase A (270 aa).

Residue aspartate 60 is the Nucleophile of the active site. An RNA binding region spans residues 107 to 111 (FHARF). Position 118 (tyrosine 118) interacts with substrate. Positions 168 to 172 (QCQSR) are interaction with tRNA.

Belongs to the tRNA pseudouridine synthase TruA family. Homodimer.

It catalyses the reaction uridine(38/39/40) in tRNA = pseudouridine(38/39/40) in tRNA. Functionally, formation of pseudouridine at positions 38, 39 and 40 in the anticodon stem and loop of transfer RNAs. This Klebsiella pneumoniae subsp. pneumoniae (strain ATCC 700721 / MGH 78578) protein is tRNA pseudouridine synthase A.